Reading from the N-terminus, the 103-residue chain is Large ribosomal subunit protein bL21 (103 aa).

This sequence belongs to the bacterial ribosomal protein bL21 family. Part of the 50S ribosomal subunit. Contacts protein L20.

Its function is as follows. This protein binds to 23S rRNA in the presence of protein L20. In Acinetobacter baylyi (strain ATCC 33305 / BD413 / ADP1), this protein is Large ribosomal subunit protein bL21.